Consider the following 224-residue polypeptide: UPF0502 protein Psyr_2419 (224 aa).

The protein belongs to the UPF0502 family.

This chain is UPF0502 protein Psyr_2419, found in Pseudomonas syringae pv. syringae (strain B728a).